The sequence spans 34 residues: Ribonuclease PL1 (34 aa).

An N-linked (GlcNAc...) asparagine; partial glycan is attached at Asn-4. The active-site Proton acceptor is His-15.

Belongs to the pancreatic ribonuclease family.

Its subcellular location is the lysosome. The enzyme catalyses an [RNA] containing cytidine + H2O = an [RNA]-3'-cytidine-3'-phosphate + a 5'-hydroxy-ribonucleotide-3'-[RNA].. The catalysed reaction is an [RNA] containing uridine + H2O = an [RNA]-3'-uridine-3'-phosphate + a 5'-hydroxy-ribonucleotide-3'-[RNA].. The sequence is that of Ribonuclease PL1 from Sus scrofa (Pig).